Reading from the N-terminus, the 419-residue chain is D-inositol 3-phosphate glycosyltransferase (419 aa).

Histidine 9 lines the 1D-myo-inositol 3-phosphate pocket. UDP-N-acetyl-alpha-D-glucosamine contacts are provided by residues 15–16 (QP) and glycine 23. Residues 20–25 (DAGGMN), lysine 78, tyrosine 110, threonine 134, and arginine 154 contribute to the 1D-myo-inositol 3-phosphate site. UDP-N-acetyl-alpha-D-glucosamine is bound by residues arginine 231, lysine 236, and arginine 295. Mg(2+) contacts are provided by tyrosine 304, arginine 305, and alanine 307. Residues glutamate 317 and glutamate 325 each coordinate UDP-N-acetyl-alpha-D-glucosamine. Threonine 331 provides a ligand contact to Mg(2+).

This sequence belongs to the glycosyltransferase group 1 family. MshA subfamily. Homodimer.

It catalyses the reaction 1D-myo-inositol 3-phosphate + UDP-N-acetyl-alpha-D-glucosamine = 1D-myo-inositol 2-acetamido-2-deoxy-alpha-D-glucopyranoside 3-phosphate + UDP + H(+). Catalyzes the transfer of a N-acetyl-glucosamine moiety to 1D-myo-inositol 3-phosphate to produce 1D-myo-inositol 2-acetamido-2-deoxy-glucopyranoside 3-phosphate in the mycothiol biosynthesis pathway. This Corynebacterium jeikeium (strain K411) protein is D-inositol 3-phosphate glycosyltransferase.